The sequence spans 73 residues: DNA-directed RNA polymerase subunit omega (73 aa).

The protein belongs to the RNA polymerase subunit omega family. The RNAP catalytic core consists of 2 alpha, 1 beta, 1 beta' and 1 omega subunit. When a sigma factor is associated with the core the holoenzyme is formed, which can initiate transcription.

The enzyme catalyses RNA(n) + a ribonucleoside 5'-triphosphate = RNA(n+1) + diphosphate. Functionally, promotes RNA polymerase assembly. Latches the N- and C-terminal regions of the beta' subunit thereby facilitating its interaction with the beta and alpha subunits. In Oleidesulfovibrio alaskensis (strain ATCC BAA-1058 / DSM 17464 / G20) (Desulfovibrio alaskensis), this protein is DNA-directed RNA polymerase subunit omega.